The chain runs to 268 residues: Undecaprenyl-diphosphatase (268 aa).

Helical transmembrane passes span Phe47–Leu67, Phe83–Gly103, Leu109–Val129, Phe144–Val164, Ala184–Leu204, Ile217–Phe237, and Leu248–Leu268.

It belongs to the UppP family.

It is found in the cell inner membrane. The enzyme catalyses di-trans,octa-cis-undecaprenyl diphosphate + H2O = di-trans,octa-cis-undecaprenyl phosphate + phosphate + H(+). In terms of biological role, catalyzes the dephosphorylation of undecaprenyl diphosphate (UPP). Confers resistance to bacitracin. This chain is Undecaprenyl-diphosphatase, found in Rhodopseudomonas palustris (strain ATCC BAA-98 / CGA009).